Here is a 408-residue protein sequence, read N- to C-terminus: Argininosuccinate synthase (408 aa).

Residues 11-19 and alanine 38 each bind ATP; that span reads AYSGGLDTS. Positions 91 and 96 each coordinate L-citrulline. Glycine 121 is an ATP binding site. Residues threonine 123, asparagine 127, and aspartate 128 each contribute to the L-aspartate site. Position 127 (asparagine 127) interacts with L-citrulline. Residues arginine 131, serine 182, serine 191, glutamate 267, and tyrosine 279 each contribute to the L-citrulline site.

The protein belongs to the argininosuccinate synthase family. Type 1 subfamily. In terms of assembly, homotetramer.

It is found in the cytoplasm. The enzyme catalyses L-citrulline + L-aspartate + ATP = 2-(N(omega)-L-arginino)succinate + AMP + diphosphate + H(+). It functions in the pathway amino-acid biosynthesis; L-arginine biosynthesis; L-arginine from L-ornithine and carbamoyl phosphate: step 2/3. In Azorhizobium caulinodans (strain ATCC 43989 / DSM 5975 / JCM 20966 / LMG 6465 / NBRC 14845 / NCIMB 13405 / ORS 571), this protein is Argininosuccinate synthase.